A 31-amino-acid chain; its full sequence is Cyclotide cter-E (31 aa).

Residues 1 to 31 constitute a cross-link (cyclopeptide (Gly-Asp)); that stretch reads GIPCAESCVWIPCTVTALLGCSCKDKVCYLD. 3 disulfide bridges follow: cysteine 4/cysteine 21, cysteine 8/cysteine 23, and cysteine 13/cysteine 28.

Contains 3 disulfide bonds. Post-translationally, this is a cyclic peptide.

Functionally, probably participates in a plant defense mechanism. This Clitoria ternatea (Butterfly pea) protein is Cyclotide cter-E.